Consider the following 557-residue polypeptide: DNA 3'-5' helicase XPB (557 aa).

The segment at 1–135 is required for protein stability or solubility; the sequence is MTDGPLIVQS…APLLGTRIAP (135 aa). The Helicase ATP-binding domain maps to 190–344; sequence VDNFWNGGSG…DVFSLIGPKR (155 aa). 203 to 210 serves as a coordination point for ATP; that stretch reads LPCGAGKT. The DEAH box motif lies at 298 to 301; the sequence is DEVH. The Helicase C-terminal domain occupies 398 to 544; it reads RVVEKLVAQH…AYRIVDADDI (147 aa).

The protein belongs to the helicase family. RAD25/XPB subfamily. Monomer. Requires Mn(2+) as cofactor. Mg(2+) is required as a cofactor. Ca(2+) serves as cofactor.

It catalyses the reaction Couples ATP hydrolysis with the unwinding of duplex DNA by translocating in the 3'-5' direction.. The enzyme catalyses ATP + H2O = ADP + phosphate + H(+). ATP-dependent 3'-5' DNA helicase, unwinds 3'-overhangs, 3'- flaps, and splayed-arm DNA substrates but not 5'-overhangs or 5'-flap substrates. Requires ATP hydrolysis for activity; the ATPase activity is DNA-dependent and requires a minimum of 4 single-stranded nucleotides (nt) with 6-10 nt providing all necessary interactions for full processive unwinding. The ATPase prefers ATP over CTP or GTP, is almost inactive with TTP. This is DNA 3'-5' helicase XPB from Kineococcus radiotolerans (strain ATCC BAA-149 / DSM 14245 / SRS30216).